The primary structure comprises 226 residues: MKVTFLGHAVVLIEGKKNIIIDPFISGNPVCPVKLEGLPKIDYILVTHGHGDHLGDAVEIAKKNDATVISNYEICHYLGKKGVKTHAMHIGGSYLFDFGRVKMTPAVHGSGILDGDSMIYGGNPSGFLITIEGKKIYHAGDTGLTREMELLAEENVDVAFLPIGGNFVMDVEDAVRAAVMIKPKKVVPMHYGTWELIFADVELFKKKVEEKGVECVILEPGESLEL.

This sequence belongs to the UPF0173 family.

The sequence is that of UPF0173 metal-dependent hydrolase TM_1162 from Thermotoga maritima (strain ATCC 43589 / DSM 3109 / JCM 10099 / NBRC 100826 / MSB8).